The primary structure comprises 192 residues: Small ribosomal subunit protein bS16 (192 aa).

The span at 149–161 (EKKAAEAKAKAEA) shows a compositional bias: basic and acidic residues. Positions 149–192 (EKKAAEAKAKAEAEAAAAAEEATETEETPMEAAAEEAPAAESAE) are disordered. Residues 178–192 (MEAAAEEAPAAESAE) show a composition bias toward low complexity.

It belongs to the bacterial ribosomal protein bS16 family.

This chain is Small ribosomal subunit protein bS16, found in Porphyromonas gingivalis (strain ATCC 33277 / DSM 20709 / CIP 103683 / JCM 12257 / NCTC 11834 / 2561).